We begin with the raw amino-acid sequence, 164 residues long: Peptide methionine sulfoxide reductase MsrA (164 aa).

The active site involves cysteine 16.

The protein belongs to the MsrA Met sulfoxide reductase family.

The enzyme catalyses L-methionyl-[protein] + [thioredoxin]-disulfide + H2O = L-methionyl-(S)-S-oxide-[protein] + [thioredoxin]-dithiol. The catalysed reaction is [thioredoxin]-disulfide + L-methionine + H2O = L-methionine (S)-S-oxide + [thioredoxin]-dithiol. In terms of biological role, has an important function as a repair enzyme for proteins that have been inactivated by oxidation. Catalyzes the reversible oxidation-reduction of methionine sulfoxide in proteins to methionine. The chain is Peptide methionine sulfoxide reductase MsrA from Methanoculleus marisnigri (strain ATCC 35101 / DSM 1498 / JR1).